A 445-amino-acid chain; its full sequence is Tubulin beta-3 chain (445 aa).

8 residues coordinate GTP: Gln-11, Glu-69, Ser-138, Gly-142, Thr-143, Gly-144, Asn-204, and Asn-226. Residue Glu-69 coordinates Mg(2+). Polar residues predominate over residues 417–426 (DLVSEYQQYQ). The disordered stretch occupies residues 417–445 (DLVSEYQQYQEASADDEADEFDEEEGDEE). A compositionally biased stretch (acidic residues) spans 429–445 (SADDEADEFDEEEGDEE).

Belongs to the tubulin family. As to quaternary structure, dimer of alpha and beta chains. A typical microtubule is a hollow water-filled tube with an outer diameter of 25 nm and an inner diameter of 15 nM. Alpha-beta heterodimers associate head-to-tail to form protofilaments running lengthwise along the microtubule wall with the beta-tubulin subunit facing the microtubule plus end conferring a structural polarity. Microtubules usually have 13 protofilaments but different protofilament numbers can be found in some organisms and specialized cells. Mg(2+) serves as cofactor.

The protein localises to the cytoplasm. It localises to the cytoskeleton. Tubulin is the major constituent of microtubules, a cylinder consisting of laterally associated linear protofilaments composed of alpha- and beta-tubulin heterodimers. Microtubules grow by the addition of GTP-tubulin dimers to the microtubule end, where a stabilizing cap forms. Below the cap, tubulin dimers are in GDP-bound state, owing to GTPase activity of alpha-tubulin. The protein is Tubulin beta-3 chain (TUBB3) of Oomycete-like sp. (strain MacKay2000).